The following is a 137-amino-acid chain: Methylglyoxal synthase (137 aa).

The MGS-like domain occupies 1-137; that stretch reads MNIALVAHDQ…EVRKSKSQRI (137 aa). Substrate contacts are provided by residues His-8, Lys-12, 34-37, and 54-55; these read TGTT and SG. Asp-60 functions as the Proton donor/acceptor in the catalytic mechanism. Substrate is bound at residue His-87.

The protein belongs to the methylglyoxal synthase family.

The enzyme catalyses dihydroxyacetone phosphate = methylglyoxal + phosphate. Catalyzes the formation of methylglyoxal from dihydroxyacetone phosphate. The polypeptide is Methylglyoxal synthase (Clostridioides difficile (strain 630) (Peptoclostridium difficile)).